Consider the following 145-residue polypeptide: Large ribosomal subunit protein uL16 (145 aa).

This sequence belongs to the universal ribosomal protein uL16 family. In terms of assembly, part of the 50S ribosomal subunit.

Functionally, binds 23S rRNA and is also seen to make contacts with the A and possibly P site tRNAs. This chain is Large ribosomal subunit protein uL16, found in Exiguobacterium sp. (strain ATCC BAA-1283 / AT1b).